We begin with the raw amino-acid sequence, 1377 residues long: MASLSDQDLEMGLFCPRNYQTEMFEASLQENIIVAMDTGSGKTHVALLRIMNELETRRPQKLIWFLAPTVALCFQQHDVITKNLPAVKSRTLTGQDKVELWTEQAIWDAILKDMQVVVSTHAVLADAMSNGFVRVSQLGLLIFDEAHHCMRRHPANRIMQDFYHPTLVKQGPDAVPGILGLTASPVVRTNSQELSMIESNMNAICKTPRAHRQELLTHTHRPHLQQIWYTPVNIDDPTSGTRTLRALIHAWETIDLEDDPYVKQLRRSTFDGKALQKALLTRKTYCNESLRRFVERSCHIFQELGGWAVDYFIHASIRRLREKIDDSALMLDWDNEEKEYLASFLSNIATIQSDPPRRPEDFIPSPKLEALISFLSSTDDSTFSGLIFAKQRATVTVLATLLSVHPLTKDRFRCAAFVGWSGGGNRKDLIGELLSMQMQRDTLSEFRSGQKNLIVATDVLEEGIDISACSVVICYDKPANVKSFVQRRGRARRKESTFAILFSTDDELCDLRKWQLLEEAMIEAYQDDERKRCEALALETMAEVVTERFEVESTGAVLTADTAVARLHHFCSILPQQPYVDNRPELSFEYDGTGRRRGTFKLPSCVHPDVRRTRGEKWWTTERAATKEAAFQTCKRLYEFGLLNDHLLPLTRKPELRLTDFGGLPSIIEVAEQYDPWTDWAYSWSSPDIHQSRIRVQLNGNPEYQLSMSLMGPTVLPALDAMTLFWDSQNIFTLAFDAAQRVPLVPGDVIEHMRAITALYLQAPSSRSIREERDYVALFGPDLPHTELGAWLLKNGGNDTALDVYSRQVASPTMGIVRDRTRYDEPLLFKKWVVTEDGDVAVVEMECHSLPKRRNLLQRQTLAQGEIVTTAVDTAPAKARIIPATACTIDRLPFTDTIFGLFISAILDRLEATLIATRLCETILQDVQFSSTRHVITAISAPTAQSPTDYQRYEFFGDSVLKFTVSCQLYMQHPNWPEGYLSEGRDEIVQNNRLARAALDVGLDAFILTRRFTPRKWTAPLISEKAVEVAGKRPLSSKVLADVVESLIGAAYMDGGQAKAHTCIRRLLPEIEICPITPPPVHESAPHVMNDSLKQHLGYTFVNEALLVEALTHPSCRSDASTQSYQRLEFLGDAVLDMVVVHAMAHHAVECPQGEMTMIKHALTNANLLAFFCMEFVVAQEHTDVDAVPAAGGFALRSEQKPIELWRFMRSEALDLNNARETVLHRHSQLRAEIVHALHHGAQYPWQALSQLNADKFFSDIVESILGAIFVDSRGDLDVCAMFVERIGLLPYLRRILADRVDVMHPRHTAQRLSKGEALFTAKRVVDGSGNASYRCVVKRNKEEIVVVEGCLSSEEAEVKAANATIGILRANAVNLV.

The region spanning Met-23–Ala-203 is the Helicase ATP-binding domain. Position 36-43 (Met-36–Thr-43) interacts with ATP. The DEAH box signature appears at Asp-144 to His-147. The Helicase C-terminal domain occupies Lys-367–Val-544. A Dicer dsRNA-binding fold domain is found at Ala-563–Arg-657. 2 RNase III domains span residues Ala-916–Gly-1056 and Asn-1090–Arg-1274. Mg(2+) contacts are provided by Glu-1129, Asp-1260, and Glu-1263.

This sequence belongs to the helicase family. Dicer subfamily. It depends on Mg(2+) as a cofactor. Requires Mn(2+) as cofactor.

Functionally, dicer-like endonuclease involved in cleaving double-stranded RNA in the RNA interference (RNAi) pathway. Produces 21 to 25 bp dsRNAs (siRNAs) which target the selective destruction of homologous RNAs leading to sequence-specific suppression of gene expression, called post-transcriptional gene silencing (PTGS). Part of a broad host defense response against viral infection and transposons. The protein is Dicer-like protein 2 (dcl2) of Aspergillus terreus (strain NIH 2624 / FGSC A1156).